Reading from the N-terminus, the 333-residue chain is Biotin synthase (333 aa).

The Radical SAM core domain maps to 47 to 276 (ADIQRASLLS…KARVRLSAGR (230 aa)). Residues C62, C66, and C69 each coordinate [4Fe-4S] cluster. [2Fe-2S] cluster contacts are provided by C107, C139, C199, and R271.

Belongs to the radical SAM superfamily. Biotin synthase family. In terms of assembly, homodimer. [4Fe-4S] cluster is required as a cofactor. Requires [2Fe-2S] cluster as cofactor.

It catalyses the reaction (4R,5S)-dethiobiotin + (sulfur carrier)-SH + 2 reduced [2Fe-2S]-[ferredoxin] + 2 S-adenosyl-L-methionine = (sulfur carrier)-H + biotin + 2 5'-deoxyadenosine + 2 L-methionine + 2 oxidized [2Fe-2S]-[ferredoxin]. The protein operates within cofactor biosynthesis; biotin biosynthesis; biotin from 7,8-diaminononanoate: step 2/2. Its function is as follows. Catalyzes the conversion of dethiobiotin (DTB) to biotin by the insertion of a sulfur atom into dethiobiotin via a radical-based mechanism. This is Biotin synthase from Methylobacterium nodulans (strain LMG 21967 / CNCM I-2342 / ORS 2060).